The chain runs to 134 residues: Secreted RxLR effector protein 1 (134 aa).

An N-terminal signal peptide occupies residues 1–22; the sequence is MFCRSPLVAVILLVLATHIVLA. The segment at 32-60 is disordered; the sequence is SETVPSDSSQTTRKSTRRTTSVDNKRRLR. Over residues 37–52 the composition is skewed to low complexity; that stretch reads SDSSQTTRKSTRRTTS. Residues 57 to 79 carry the RxLR-dEER motif; that stretch reads RRLRQQIMGKDGPVVNDVHAEER.

The protein belongs to the RxLR effector family.

Its subcellular location is the secreted. It is found in the host nucleus. Effector that acts as a broad suppressor of cell death to interrupt plant immunity. Inhibits cell death induced by cell death-inducing proteins, including the PAMP elicitor INF1 from P.infestans. This Plasmopara viticola (Downy mildew of grapevine) protein is Secreted RxLR effector protein 1.